The sequence spans 571 residues: RNA polymerase sigma factor SigA (571 aa).

Residues 321–391 (MVESNLRLVI…TRAIADQART (71 aa)) form a sigma-70 factor domain-2 region. The Interaction with polymerase core subunit RpoC signature appears at 345 to 348 (DLIQ). The interval 400–476 (ETINKVLRGA…DTAVESPAEA (77 aa)) is sigma-70 factor domain-3. Positions 489–542 (VLKTLTDRERFVLIHRFGLLDGRPKTLEEVGSAFNVTRERIRQIEAKALRKMRH) are sigma-70 factor domain-4. Positions 515–534 (LEEVGSAFNVTRERIRQIEA) form a DNA-binding region, H-T-H motif.

The protein belongs to the sigma-70 factor family. RpoD/SigA subfamily. Interacts transiently with the RNA polymerase catalytic core.

The protein resides in the cytoplasm. Functionally, sigma factors are initiation factors that promote the attachment of RNA polymerase to specific initiation sites and are then released. This sigma factor is the primary sigma factor during exponential growth. The polypeptide is RNA polymerase sigma factor SigA (Chlamydia muridarum (strain MoPn / Nigg)).